We begin with the raw amino-acid sequence, 150 residues long: Small ribosomal subunit protein uS11x (150 aa).

The protein belongs to the universal ribosomal protein uS11 family.

The protein resides in the cytoplasm. In Arabidopsis thaliana (Mouse-ear cress), this protein is Small ribosomal subunit protein uS11x (RPS14C).